The primary structure comprises 701 residues: MDPTSKSGLNQVSDVVFVIEGTANLGPYFESLRNNYILPTIEYFNGGPPAETDFGGDYGGTQYGLVVFNTVDCAPESYVQCHAPTSSAFEFVSWIDSIQFMGGGAESCSLIAEGLSVALQLFDDFKKMREQIGQTHKVCVLLCNSPPYLLPAVESVSYTGCTADSLVQIIRDRGIHFSVIAPRKLPALRSLFERASSVAGLPESSHPDYSQDPFHMVLVRGIALPVAPGGGSVPVSLKPVLPPQSLPVNQNPLVPVASTAPQMNTFQNVSLHAAHDAAQKALEEAANQQQKNRFGQISTPPFSQSPVLPPGGKPSLSTVTTVSPPVLTQQQVPPQQPQQQTQVPQPGLPAVNQQPPQASQQQPNNQQTPPPTQPGMAAVPAPPPGAQQGVANKVVAWSGVLEWQEKPKASSMDSNTKLTRSLPCQVQVSQGENLNTDQWPQKLIMQLIPQQLLTTLGPLFRNSRMVQFLFTNKDMESLKGLFRIMTSGFAGCVHFPHSAPCEVRVLMLLYSSRKRIFMGLIPNDQSGFVNGIRQVITNHKQVQQQRSMQPGQVQPNQNFLNRPPGPIPVTHGNVPQQLRAAATGNQQAPVTGAPPNQVQGQAQAPGGGMLRLQNPGANPQLRSLLLSQQPQGGMQGMQGMHPIQQMVHAAPGGGAQMQPQWRQPHQGPLMVPTGPRGPVTQNPGMPSVSSVMEDEILMDLI.

2 disordered regions span residues 277–388 and 580–617; these read AAQK…GAQQ and AAAT…NPGA. A compositionally biased stretch (polar residues) spans 286 to 306; that stretch reads ANQQQKNRFGQISTPPFSQSP. Low complexity-rich tracts occupy residues 314–367 and 593–604; these read PSLS…NNQQ and APPNQVQGQAQA. An LXXLL motif motif is present at residues 621 to 625; that stretch reads LRSLL. The segment at 650–689 is disordered; it reads APGGGAQMQPQWRQPHQGPLMVPTGPRGPVTQNPGMPSVS. Residues 679–689 show a composition bias toward polar residues; that stretch reads VTQNPGMPSVS.

The protein belongs to the Mediator complex subunit 25 family. In terms of assembly, component of the Mediator complex.

Its subcellular location is the nucleus. In terms of biological role, component of the Mediator complex, a coactivator involved in the regulated transcription of nearly all RNA polymerase II-dependent genes. Mediator functions as a bridge to convey information from gene-specific regulatory proteins to the basal RNA polymerase II transcription machinery. Mediator is recruited to promoters by direct interactions with regulatory proteins and serves as a scaffold for the assembly of a functional preinitiation complex with RNA polymerase II and the general transcription factors. This Danio rerio (Zebrafish) protein is Mediator of RNA polymerase II transcription subunit 25 (med25).